We begin with the raw amino-acid sequence, 147 residues long: Antiholin-like protein LrgA (147 aa).

A run of 4 helical transmembrane segments spans residues 12–32 (PAHFFHQVIVIALVLFVSKII), 35–55 (FMPIPMPGSVIGLVLLFVLLC), 74–94 (NIGLLFVPAGISVVNSLGVIS), and 98–118 (FLIIGLIIVSTILLLICTGYV).

The protein belongs to the CidA/LrgA family. LrgA subfamily.

It is found in the cell membrane. Inhibits the expression or activity of extracellular murein hydrolases by interacting, possibly with LrgB, with the holin-like proteins CidA and/or CidB. The LrgAB and CidAB proteins may affect the proton motive force of the membrane. May be involved in programmed cell death (PCD), possibly triggering PCD in response to antibiotics and environmental stresses. The sequence is that of Antiholin-like protein LrgA from Staphylococcus aureus (strain MSSA476).